The sequence spans 46 residues: Protein PsbN (46 aa).

The chain crosses the membrane as a helical span at residues 10-30 (IAITILIVLLGLTAFGVYTAF).

It belongs to the PsbN family.

The protein resides in the cellular thylakoid membrane. Functionally, may play a role in photosystem I and II biogenesis. In Prochlorococcus marinus (strain SARG / CCMP1375 / SS120), this protein is Protein PsbN.